The primary structure comprises 363 residues: 3-isopropylmalate dehydrogenase (363 aa).

79–92 (GPKWEHLPPNDQPE) is a binding site for NAD(+). Residues R100, R110, R139, and D228 each coordinate substrate. The Mg(2+) site is built by D228, D252, and D256. An NAD(+)-binding site is contributed by 286–298 (GSAPDIAGKNIAN).

It belongs to the isocitrate and isopropylmalate dehydrogenases family. LeuB type 1 subfamily. As to quaternary structure, homodimer. Requires Mg(2+) as cofactor. Mn(2+) serves as cofactor.

It localises to the cytoplasm. It catalyses the reaction (2R,3S)-3-isopropylmalate + NAD(+) = 4-methyl-2-oxopentanoate + CO2 + NADH. It participates in amino-acid biosynthesis; L-leucine biosynthesis; L-leucine from 3-methyl-2-oxobutanoate: step 3/4. Functionally, catalyzes the oxidation of 3-carboxy-2-hydroxy-4-methylpentanoate (3-isopropylmalate) to 3-carboxy-4-methyl-2-oxopentanoate. The product decarboxylates to 4-methyl-2 oxopentanoate. This is 3-isopropylmalate dehydrogenase from Vibrio vulnificus (strain CMCP6).